The following is a 38-amino-acid chain: Large ribosomal subunit protein bL36 (38 aa).

The protein belongs to the bacterial ribosomal protein bL36 family.

This Prochlorococcus marinus (strain MIT 9312) protein is Large ribosomal subunit protein bL36.